Here is a 147-residue protein sequence, read N- to C-terminus: Hemoglobin subunit epsilon (147 aa).

In terms of domain architecture, Globin spans 3 to 147 (HFTAEEKAAV…VAIALAHKYH (145 aa)). Phosphoserine occurs at positions 14 and 51. 2 residues coordinate heme b: His64 and His93.

Belongs to the globin family. As to quaternary structure, heterotetramer of two alpha chains and two epsilon chains in early embryonic hemoglobin Gower-2; two zeta chains and two epsilon chains in early embryonic hemoglobin Gower-1. Red blood cells.

The epsilon chain is a beta-type chain of early mammalian embryonic hemoglobin. In Pan troglodytes (Chimpanzee), this protein is Hemoglobin subunit epsilon (HBE1).